The primary structure comprises 465 residues: Uronate isomerase (465 aa).

Belongs to the metallo-dependent hydrolases superfamily. Uronate isomerase family.

The enzyme catalyses D-glucuronate = D-fructuronate. It carries out the reaction aldehydo-D-galacturonate = keto-D-tagaturonate. Its pathway is carbohydrate metabolism; pentose and glucuronate interconversion. In Streptococcus equi subsp. zooepidemicus (strain H70), this protein is Uronate isomerase.